A 500-amino-acid polypeptide reads, in one-letter code: V-type proton ATPase subunit B (500 aa).

Belongs to the ATPase alpha/beta chains family. V-ATPase is a heteromultimeric enzyme composed of a peripheral catalytic V1 complex (main components: subunits A, B, C, D, E, and F) attached to an integral membrane V0 proton pore complex (main component: the proteolipid protein).

Non-catalytic subunit of the peripheral V1 complex of vacuolar ATPase. V-ATPase is responsible for acidifying a variety of intracellular compartments in eukaryotic cells. This chain is V-type proton ATPase subunit B, found in Cyanidium caldarium (Red alga).